We begin with the raw amino-acid sequence, 426 residues long: MSGGVYGGDEVGALVFDIGSFSVRAGYAGEDCPKADFPTTVGLLAAEEGGGLELEGEKEKKGKIFHIDTNALHVPRDGAEVMSPLKNGMIEDWECFRAILDHTYSKHVKSEPNLHPVLMSEAPWNTRAKREKLTELMFEQYNIPAFFLCKTAVLTAFANGRSTGLVLDSGATHTTAIPVHDGYVLQQGIVKSPLAGDFISMQCRELFQEMAIDIIPPYMIAAKEPVREGAPPNWKKKEKLPQVSKSWHNYMCNEVIQDFQASVLQVSDSPYDEQVAAQMPTVHYEMPNGYNTDYGAERLRIPEGLFDPSNVKGLSGNTMLGVGHVVTTSIGMCDIDIRPGLYGSVIVTGGNTLLQGFTDRLNRELSQKTPPSMRLKLIASNSTMERKFSPWIGGSILASLGTFQQMWISKQEYEEGGKQCVERKCP.

The tract at residues 39–82 is essential for mediating its function in dendritic development; may contribute to neuronal-specific targeting; that stretch reads TTVGLLAAEEGGGLELEGEKEKKGKIFHIDTNALHVPRDGAEVM.

It belongs to the actin family. Component of the multiprotein chromatin-remodeling complexes SWI/SNF: SWI/SNF-A (BAF), SWI/SNF-B (PBAF) and related complexes. The canonical complex contains a catalytic subunit (either SMARCA4/BRG1/BAF190A or SMARCA2/BRM/BAF190B) and at least SMARCE1, ACTL6A/BAF53, SMARCC1/BAF155, SMARCC2/BAF170, and SMARCB1/SNF5/BAF47. Other subunits specific to each of the complexes may also be present permitting several possible combinations developmentally and tissue specific. Component of the BAF complex, which includes at least actin (ACTB), ARID1A/BAF250A, ARID1B/BAF250B, SMARCA2/BRM, SMARCA4/BRG1/BAF190A, ACTL6A/BAF53, ACTL6B/BAF53B, SMARCE1/BAF57, SMARCC1/BAF155, SMARCC2/BAF170, SMARCB1/SNF5/INI1, and one or more SMARCD1/BAF60A, SMARCD2/BAF60B, or SMARCD3/BAF60C. Component of neuron-specific chromatin remodeling complex (nBAF complex) composed of at least, ARID1A/BAF250A or ARID1B/BAF250B, SMARCD1/BAF60A or SMARCD2/BAF60B or SMARCD3/BAF60C, SMARCA2/BRM/BAF190B, SMARCA4/BRG1/BAF190A, SMARCB1/BAF47, SMARCC1/BAF155, SMARCE1/BAF57, SMARCC2/BAF170, DPF1/BAF45B, DPF3/BAF45C, ACTL6B/BAF53B and actin (ACTB). Note that the nBAF complex is polymorphic in regard to the ATPase, SMARCA2 and SMARCA4 occupying mutually exclusive positions. May be a component of the SWI/SNF-B (PBAF) chromatin remodeling complex, at least composed of SMARCA4/BRG1, SMARCB1/BAF47/SNF5, ACTL6A/BAF53A or ACTL6B/BAF53B, SMARCE1/BAF57, SMARCD1/BAF60A, SMARCD2/BAF60B, perhaps SMARCD3/BAF60C, SMARCC1/BAF155, SMARCC2/BAF170, PBRM1/BAF180, ARID2/BAF200 and actin.

Its subcellular location is the nucleus. Functionally, involved in transcriptional activation and repression of select genes by chromatin remodeling (alteration of DNA-nucleosome topology). Component of SWI/SNF chromatin remodeling complexes that carry out key enzymatic activities, changing chromatin structure by altering DNA-histone contacts within a nucleosome in an ATP-dependent manner. Belongs to the neuron-specific chromatin remodeling complex (nBAF complex), as such plays a role in remodeling mononucleosomes in an ATP-dependent fashion, and is required for postmitotic neural development and dendritic outgrowth. During neural development a switch from a stem/progenitor to a postmitotic chromatin remodeling mechanism occurs as neurons exit the cell cycle and become committed to their adult state. The transition from proliferating neural stem/progenitor cells to postmitotic neurons requires a switch in subunit composition of the npBAF and nBAF complexes. As neural progenitors exit mitosis and differentiate into neurons, npBAF complexes which contain ACTL6A/BAF53A and PHF10/BAF45A, are exchanged for homologous alternative ACTL6B/BAF53B and DPF1/BAF45B or DPF3/BAF45C subunits in neuron-specific complexes (nBAF). The npBAF complex is essential for the self-renewal/proliferative capacity of the multipotent neural stem cells. The nBAF complex along with CREST plays a role regulating the activity of genes essential for dendrite growth. ACTL6B/BAF53B is not essential for assembly of the nBAF complex but is required for targeting the complex and CREST to the promoter of genes essential for dendritic growth. Essential for neuronal maturation and dendrite development. The sequence is that of Actin-like protein 6B (ACTL6B) from Bos taurus (Bovine).